Consider the following 173-residue polypeptide: Putative metal-dependent hydrolase BCE_2729 (173 aa).

Zn(2+) contacts are provided by histidine 65, histidine 156, and histidine 160.

It belongs to the metal hydrolase YfiT family. Homodimer. Requires Zn(2+) as cofactor.

It is found in the cytoplasm. In terms of biological role, possible metal-dependent hydrolase. This is Putative metal-dependent hydrolase BCE_2729 from Bacillus cereus (strain ATCC 10987 / NRS 248).